The following is a 393-amino-acid chain: Probable acetyl-CoA acetyltransferase (393 aa).

Position 2 (Thr2) is a propeptide, removed; alternate. Residue Cys88 is the Acyl-thioester intermediate of the active site. Residues His349 and Cys379 each act as proton acceptor in the active site.

It belongs to the thiolase-like superfamily. Thiolase family.

The catalysed reaction is 2 acetyl-CoA = acetoacetyl-CoA + CoA. The polypeptide is Probable acetyl-CoA acetyltransferase (fadA4) (Mycobacterium tuberculosis (strain ATCC 25618 / H37Rv)).